The chain runs to 566 residues: FAD-dependent monooxygenase asqG (566 aa).

Positions 1-19 (MAAFTVIIIGGSISGLTLA) are cleaved as a signal peptide. FAD is bound by residues glutamate 33, valine 47, arginine 113, aspartate 313, and alanine 326. Transmembrane regions (helical) follow at residues 448–468 (ASST…GAVW) and 482–502 (GYTL…ASAV).

Belongs to the paxM FAD-dependent monooxygenase family. Requires FAD as cofactor.

It is found in the membrane. The catalysed reaction is [(1'E)-3'-hydroxy-3',7'-dimethylocta-1',6'-dien-1'-yl]-quinolinone B + NADPH + O2 + H(+) = [(1'E)-5'-(3',3'-dimethyloxiran-2'-yl)-3'-hydroxy-3'-methylpent-1'-en-1'-yl]-quinolinone B + NADP(+) + H2O. It participates in secondary metabolite biosynthesis. Its pathway is alkaloid biosynthesis. The protein operates within mycotoxin biosynthesis. In terms of biological role, FAD-dependent monooxygenase; part of the gene cluster that mediates the biosynthesis of the aspoquinolone mycotoxins. Within the pathway, the FAD-dependent monooxygenase asqG catalyzes the epoxidation of the terminal C7'-C8' olefin to produce the intermediate [(1'E)-5'-(3',3'-dimethyloxiran-2'-yl)-3'-hydroxy-3'-methylpent-1'-en-1'-yl]-quinolinone B. The first step of the pathway is catalyzed by the nonribosomal peptide synthetase asqK that condenses anthranilic acid and O-methyl-L-tyrosine to produce 4'-methoxycyclopeptin. 4'-methoxycyclopeptin is then converted to 4'-methoxydehydrocyclopeptin by the ketoglutarate-dependent dioxygenase asqJ. AsqJ also converts its first product 4'-methoxydehydrocyclopeptin to 4'-methoxycyclopenin. The following conversion of 4'-methoxycyclopenin into 4'-methoxyviridicatin is catalyzed by the cyclopenase asqI. 4'-methoxyviridicatin is the precursor of quinolone natural products, and is further converted to quinolinone B. The prenyltransferase asqH1 then catalyzes the canonical Friedel-Crafts alkylation of quinolinone B with dimethylallyl cation to yield dimethylallyl quinolone, which is subjected to FAD-dependent dehydrogenation by the FAD-linked oxidoreductase asqF to yield conjugated aryl diene. The delta(3') double bond then serves as the site of the second alkylation with DMAPP catalyzed by the prenyltransferase asqH2 to yield a carbenium ion intermediate, which can be attacked by H(2)O to yield a styrenyl quinolone containing a C3'-hydroxyprenyl chain. The FAD-dependent monooxygenase asqG performs epoxidation of the terminal C7'-C8' olefin. Finally, after dehydratation of the epoxide at C3 by asqC, the quinolone epoxide rearrangement protein asqO catalyzes an enzymatic 3-exo-tet cyclization to yield the cyclopropyl-THF ring system in aspoquinolone. The chain is FAD-dependent monooxygenase asqG from Emericella nidulans (strain FGSC A4 / ATCC 38163 / CBS 112.46 / NRRL 194 / M139) (Aspergillus nidulans).